We begin with the raw amino-acid sequence, 111 residues long: Probable 4-amino-4-deoxy-L-arabinose-phosphoundecaprenol flippase subunit ArnE (111 aa).

Topologically, residues 1-37 (MIWLVLILASLLSVTGQLCQKQATRPVAINKRRKHIA) are cytoplasmic. A helical membrane pass occupies residues 38–58 (LWLGLGLVCLGLAMVLWLLVL). The EamA domain occupies 40-109 (LGLGLVCLGL…IIGGIVILGS (70 aa)). Residues 59–60 (QT) are Periplasmic-facing. Residues 61–81 (VPVGIAYPMLSLNFVWVTLAA) form a helical membrane-spanning segment. The Cytoplasmic portion of the chain corresponds to 82–87 (TKLWHE). The helical transmembrane segment at 88-108 (PVSFRHWCGVAFIIGGIVILG) threads the bilayer. The Periplasmic segment spans residues 109–111 (STV).

The protein belongs to the ArnE family. In terms of assembly, heterodimer of ArnE and ArnF.

It localises to the cell inner membrane. It participates in bacterial outer membrane biogenesis; lipopolysaccharide biosynthesis. Its function is as follows. Translocates 4-amino-4-deoxy-L-arabinose-phosphoundecaprenol (alpha-L-Ara4N-phosphoundecaprenol) from the cytoplasmic to the periplasmic side of the inner membrane. This is Probable 4-amino-4-deoxy-L-arabinose-phosphoundecaprenol flippase subunit ArnE from Escherichia fergusonii (strain ATCC 35469 / DSM 13698 / CCUG 18766 / IAM 14443 / JCM 21226 / LMG 7866 / NBRC 102419 / NCTC 12128 / CDC 0568-73).